The primary structure comprises 438 residues: Dol-P-Man:Man(5)GlcNAc(2)-PP-Dol alpha-1,3-mannosyltransferase (438 aa).

A Phosphoserine modification is found at Ser13. Transmembrane regions (helical) follow at residues 41–61, 95–115, 123–143, 149–169, 172–192, 203–223, 231–251, 289–309, 332–352, 356–376, and 407–427; these read YTLLVASCLCIAEVGITFWVI, TGPLVYPAGFLYIFTGLFYAT, MAQNIFAVLYLVTLVLVFLIY, VPPFVFFFMCCASYRVHSIFV, LFNDPVAMALLFLSINLFLAQ, LAVSVKMNVLLFAPGLLFLLL, ALPKLAICAALQVVLGLPFLL, FHLALLAAHLSLLLLFALCRW, ALTPNQIVSILFTSNFIGICF, LHYQFYVWYFHTLPYLLWAMP, and AALHLCHAVVLLQLWLSPESF.

Belongs to the glycosyltransferase ALG3 family.

It is found in the endoplasmic reticulum membrane. It carries out the reaction an alpha-D-Man-(1-&gt;2)-alpha-D-Man-(1-&gt;2)-alpha-D-Man-(1-&gt;3)-[alpha-D-Man-(1-&gt;6)]-beta-D-Man-(1-&gt;4)-beta-D-GlcNAc-(1-&gt;4)-alpha-D-GlcNAc-diphospho-di-trans,poly-cis-dolichol + a di-trans,poly-cis-dolichyl beta-D-mannosyl phosphate = an alpha-D-Man-(1-&gt;2)-alpha-D-Man-(1-&gt;2)-alpha-D-Man-(1-&gt;3)-[alpha-D-Man-(1-&gt;3)-alpha-D-Man-(1-&gt;6)]-beta-D-Man-(1-&gt;4)-beta-D-GlcNAc-(1-&gt;4)-alpha-D-GlcNAc-diphospho-di-trans,poly-cis-dolichol + a di-trans,poly-cis-dolichyl phosphate + H(+). The protein operates within protein modification; protein glycosylation. In terms of biological role, dol-P-Man:Man(5)GlcNAc(2)-PP-Dol alpha-1,3-mannosyltransferase that operates in the biosynthetic pathway of dolichol-linked oligosaccharides, the glycan precursors employed in protein asparagine (N)-glycosylation. The assembly of dolichol-linked oligosaccharides begins on the cytosolic side of the endoplasmic reticulum membrane and finishes in its lumen. The sequential addition of sugars to dolichol pyrophosphate produces dolichol-linked oligosaccharides containing fourteen sugars, including two GlcNAcs, nine mannoses and three glucoses. Once assembled, the oligosaccharide is transferred from the lipid to nascent proteins by oligosaccharyltransferases. In the lumen of the endoplasmic reticulum, adds the first dolichyl beta-D-mannosyl phosphate derived mannose in an alpha-1,3 linkage to Man(5)GlcNAc(2)-PP-dolichol to produce Man(6)GlcNAc(2)-PP-dolichol. Man(6)GlcNAc(2)-PP-dolichol is a substrate for ALG9, the following enzyme in the biosynthetic pathway. This Mus musculus (Mouse) protein is Dol-P-Man:Man(5)GlcNAc(2)-PP-Dol alpha-1,3-mannosyltransferase.